A 461-amino-acid polypeptide reads, in one-letter code: Glutamyl-tRNA reductase (461 aa).

Substrate is bound by residues 50–53, S111, 116–118, and Q122; these read TCNR and EPQ. C51 acts as the Nucleophile in catalysis. 191-196 lines the NADP(+) pocket; the sequence is GAGEMA.

Belongs to the glutamyl-tRNA reductase family. In terms of assembly, homodimer.

The enzyme catalyses (S)-4-amino-5-oxopentanoate + tRNA(Glu) + NADP(+) = L-glutamyl-tRNA(Glu) + NADPH + H(+). It participates in porphyrin-containing compound metabolism; protoporphyrin-IX biosynthesis; 5-aminolevulinate from L-glutamyl-tRNA(Glu): step 1/2. Functionally, catalyzes the NADPH-dependent reduction of glutamyl-tRNA(Glu) to glutamate 1-semialdehyde (GSA). In Syntrophobacter fumaroxidans (strain DSM 10017 / MPOB), this protein is Glutamyl-tRNA reductase.